A 451-amino-acid polypeptide reads, in one-letter code: Phosphoglucosamine mutase (451 aa).

Serine 101 serves as the catalytic Phosphoserine intermediate. Serine 101, aspartate 240, aspartate 242, and aspartate 244 together coordinate Mg(2+). Serine 101 bears the Phosphoserine mark.

It belongs to the phosphohexose mutase family. Requires Mg(2+) as cofactor. In terms of processing, activated by phosphorylation.

It catalyses the reaction alpha-D-glucosamine 1-phosphate = D-glucosamine 6-phosphate. Catalyzes the conversion of glucosamine-6-phosphate to glucosamine-1-phosphate. This chain is Phosphoglucosamine mutase, found in Thioalkalivibrio sulfidiphilus (strain HL-EbGR7).